The sequence spans 132 residues: Large-conductance mechanosensitive channel (132 aa).

Helical transmembrane passes span 14–34, 39–59, and 68–88; these read VLDMAVGVILGAALKSIVDSL, INPIISLFVGQVDLSGIAVTI, and IGNFLNDVINFLIIAIIVFLI.

It belongs to the MscL family. Homopentamer.

It is found in the cell membrane. Its function is as follows. Channel that opens in response to stretch forces in the membrane lipid bilayer. May participate in the regulation of osmotic pressure changes within the cell. This Latilactobacillus sakei subsp. sakei (strain 23K) (Lactobacillus sakei subsp. sakei) protein is Large-conductance mechanosensitive channel.